Reading from the N-terminus, the 71-residue chain is Large ribosomal subunit protein uL29 (71 aa).

It belongs to the universal ribosomal protein uL29 family.

The protein is Large ribosomal subunit protein uL29 of Synechococcus sp. (strain RCC307).